Consider the following 707-residue polypeptide: Anti-sigma-I factor RsgI9 (707 aa).

Residues 1 to 149 (MKITGVIVRI…NFSRISNIKN (149 aa)) lie on the Cytoplasmic side of the membrane. Residues 3–50 (ITGVIVRIHKDRAIIRTDDNRLLAVKRHNDMMVGQIVSFDANEVHKVE) enclose the RsgI N-terminal anti-sigma domain. A helical transmembrane segment spans residues 150 to 172 (FSRIASIAAAFVLIFLFGRNVML). Residues 173–707 (NNSSDSEYAY…DSEEKKEYIQ (535 aa)) are Extracellular-facing. Positions 256–283 (NDKNKKTRDKREEKIDELKETIEQGIEA) form a coiled coil. Residues 345–392 (EDNTELAPTPTPVPPETPEPTPTPTASEATPSNSPVESKSPEAVPELG) are disordered. A compositionally biased stretch (pro residues) spans 353 to 367 (TPTPVPPETPEPTPT). A compositionally biased stretch (low complexity) spans 368–379 (PTASEATPSNSP).

It localises to the cell membrane. The sequence is that of Anti-sigma-I factor RsgI9 from Acetivibrio thermocellus (strain ATCC 27405 / DSM 1237 / JCM 9322 / NBRC 103400 / NCIMB 10682 / NRRL B-4536 / VPI 7372) (Clostridium thermocellum).